Reading from the N-terminus, the 179-residue chain is MEHFRGTTILSVRRQEQVVIGGDGQVSMNNIVMKGNARKVRRLFHNQVIAGFAGGTADAFTLFERFEAKLEKHQGNLTRAAVELAKDWRSDRSLRRLEALLAVADHKASYVISGNGDVIEPEYGLIAIGSGGPYAQAAARALLENTDFSARVIVEKALSIAADICIYTNTHLTVEELSG.

The active site involves Thr-7. Ala-162, Cys-165, and Thr-168 together coordinate Na(+).

It belongs to the peptidase T1B family. HslV subfamily. In terms of assembly, a double ring-shaped homohexamer of HslV is capped on each side by a ring-shaped HslU homohexamer. The assembly of the HslU/HslV complex is dependent on binding of ATP.

It is found in the cytoplasm. The catalysed reaction is ATP-dependent cleavage of peptide bonds with broad specificity.. With respect to regulation, allosterically activated by HslU binding. Functionally, protease subunit of a proteasome-like degradation complex believed to be a general protein degrading machinery. This chain is ATP-dependent protease subunit HslV, found in Nitrosococcus oceani (strain ATCC 19707 / BCRC 17464 / JCM 30415 / NCIMB 11848 / C-107).